The following is a 198-amino-acid chain: ATP-dependent Clp protease proteolytic subunit (198 aa).

Ser-98 functions as the Nucleophile in the catalytic mechanism. Residue His-123 is part of the active site.

This sequence belongs to the peptidase S14 family. In terms of assembly, fourteen ClpP subunits assemble into 2 heptameric rings which stack back to back to give a disk-like structure with a central cavity, resembling the structure of eukaryotic proteasomes.

The protein localises to the cytoplasm. It catalyses the reaction Hydrolysis of proteins to small peptides in the presence of ATP and magnesium. alpha-casein is the usual test substrate. In the absence of ATP, only oligopeptides shorter than five residues are hydrolyzed (such as succinyl-Leu-Tyr-|-NHMec, and Leu-Tyr-Leu-|-Tyr-Trp, in which cleavage of the -Tyr-|-Leu- and -Tyr-|-Trp bonds also occurs).. Its function is as follows. Cleaves peptides in various proteins in a process that requires ATP hydrolysis. Has a chymotrypsin-like activity. Plays a major role in the degradation of misfolded proteins. The protein is ATP-dependent Clp protease proteolytic subunit of Ehrlichia ruminantium (strain Welgevonden).